The following is a 425-amino-acid chain: Serine--tRNA ligase (425 aa).

232 to 234 (TSE) provides a ligand contact to L-serine. ATP-binding positions include 263-265 (RRE) and Val-279. An L-serine-binding site is contributed by Glu-286. 350–353 (EVVS) serves as a coordination point for ATP. Thr-387 contributes to the L-serine binding site.

The protein belongs to the class-II aminoacyl-tRNA synthetase family. Type-1 seryl-tRNA synthetase subfamily. Homodimer. The tRNA molecule binds across the dimer.

The protein resides in the cytoplasm. It carries out the reaction tRNA(Ser) + L-serine + ATP = L-seryl-tRNA(Ser) + AMP + diphosphate + H(+). The catalysed reaction is tRNA(Sec) + L-serine + ATP = L-seryl-tRNA(Sec) + AMP + diphosphate + H(+). The protein operates within aminoacyl-tRNA biosynthesis; selenocysteinyl-tRNA(Sec) biosynthesis; L-seryl-tRNA(Sec) from L-serine and tRNA(Sec): step 1/1. Catalyzes the attachment of serine to tRNA(Ser). Is also able to aminoacylate tRNA(Sec) with serine, to form the misacylated tRNA L-seryl-tRNA(Sec), which will be further converted into selenocysteinyl-tRNA(Sec). The polypeptide is Serine--tRNA ligase (Methanoregula boonei (strain DSM 21154 / JCM 14090 / 6A8)).